The following is a 551-amino-acid chain: Putative transport protein NTHI0043 (551 aa).

Helical transmembrane passes span 4-24 (IAIT…IGHW), 28-48 (GVGL…HFTN), 65-85 (FGLI…FFSS), 95-115 (AFAI…HKIA), and 157-177 (VSYA…MWLI). RCK C-terminal domains follow at residues 191–275 (RFNA…IIGY) and 277–360 (VDAP…VIGN). The next 6 helical transmembrane spans lie at 370-390 (MLPV…PFYI), 402-424 (AGGP…LYWF), 438-458 (IVLF…DTLV), 463-483 (LEWM…TGIL), 492-512 (YLTI…LAFA), and 529-549 (VYPL…VLLW).

The protein belongs to the AAE transporter (TC 2.A.81) family. YidE subfamily.

It localises to the cell membrane. In Haemophilus influenzae (strain 86-028NP), this protein is Putative transport protein NTHI0043.